The following is a 238-amino-acid chain: Small heat shock protein, chloroplastic (238 aa).

Residues A31–P87 are disordered. Residues V58–Q75 show a composition bias toward low complexity. A sHSP domain is found at A124 to Q238.

Belongs to the small heat shock protein (HSP20) family.

The protein localises to the plastid. It is found in the chloroplast. This chain is Small heat shock protein, chloroplastic (HSP21), found in Triticum aestivum (Wheat).